A 215-amino-acid chain; its full sequence is 3,4-dihydroxy-2-butanone 4-phosphate synthase (215 aa).

D-ribulose 5-phosphate is bound by residues 38–39, D43, 151–155, and E175; these read RE and RRGHT. Residue E39 coordinates Mg(2+). A Mg(2+)-binding site is contributed by H154.

It belongs to the DHBP synthase family. In terms of assembly, homodimer. Mg(2+) is required as a cofactor. It depends on Mn(2+) as a cofactor.

It carries out the reaction D-ribulose 5-phosphate = (2S)-2-hydroxy-3-oxobutyl phosphate + formate + H(+). It functions in the pathway cofactor biosynthesis; riboflavin biosynthesis; 2-hydroxy-3-oxobutyl phosphate from D-ribulose 5-phosphate: step 1/1. Catalyzes the conversion of D-ribulose 5-phosphate to formate and 3,4-dihydroxy-2-butanone 4-phosphate. The sequence is that of 3,4-dihydroxy-2-butanone 4-phosphate synthase from Haemophilus influenzae (strain 86-028NP).